The following is a 296-amino-acid chain: Centromere protein O (296 aa).

Positions 17-105 (VLAHLERLET…NMKAILQAYR (89 aa)) form a coiled coil.

Belongs to the CENP-O/MCM21 family. Component of the CENPA-CAD complex, composed of CENPI, CENPK, CENPL, CENPO, CENPP, CENPQ, CENPR and CENPS. The CENPA-CAD complex interacts with the CENPA-NAC complex, at least composed of CENPA, CENPC, CENPH, CENPM, CENPN, CENPT and CENPU.

It is found in the nucleus. Its subcellular location is the chromosome. The protein localises to the centromere. The protein resides in the kinetochore. Its function is as follows. Component of the CENPA-CAD (nucleosome distal) complex, a complex recruited to centromeres which is involved in assembly of kinetochore proteins, mitotic progression and chromosome segregation. May be involved in incorporation of newly synthesized CENPA into centromeres via its interaction with the CENPA-NAC complex. Modulates the kinetochore-bound levels of NDC80 complex. The polypeptide is Centromere protein O (CENPO) (Bos taurus (Bovine)).